The following is a 105-amino-acid chain: MYAVVASGGKQHRVAVGDVVDVELLSGEPGAAVNLPALLLVDGESVTHDADALASVAVTAEVVGVVKGPKIRIHKFKNKTGYHKRQGHRQKLTRLKVTGIETGKA.

Belongs to the bacterial ribosomal protein bL21 family. Part of the 50S ribosomal subunit. Contacts protein L20.

Its function is as follows. This protein binds to 23S rRNA in the presence of protein L20. This chain is Large ribosomal subunit protein bL21, found in Frankia casuarinae (strain DSM 45818 / CECT 9043 / HFP020203 / CcI3).